The chain runs to 37 residues: Large ribosomal subunit protein bL36 (37 aa).

It belongs to the bacterial ribosomal protein bL36 family.

The polypeptide is Large ribosomal subunit protein bL36 (rpmJ) (Fusobacterium nucleatum subsp. nucleatum (strain ATCC 25586 / DSM 15643 / BCRC 10681 / CIP 101130 / JCM 8532 / KCTC 2640 / LMG 13131 / VPI 4355)).